The primary structure comprises 410 residues: 23S rRNA (uracil(747)-C(5))-methyltransferase (410 aa).

Positions 61, 67, 70, and 137 each coordinate [4Fe-4S] cluster. 4 residues coordinate S-adenosyl-L-methionine: Q253, Y279, E300, and D341. Catalysis depends on C367, which acts as the Nucleophile.

The protein belongs to the class I-like SAM-binding methyltransferase superfamily. RNA M5U methyltransferase family.

It carries out the reaction uridine(747) in 23S rRNA + S-adenosyl-L-methionine = 5-methyluridine(747) in 23S rRNA + S-adenosyl-L-homocysteine + H(+). Its activity is regulated as follows. Activated by magnesium ions. Catalyzes the formation of 5-methyl-uridine at position equivalent to 747 (m5U747) in 23S rRNA (m5U859 in the P.abyssi numbering). The polypeptide is 23S rRNA (uracil(747)-C(5))-methyltransferase (Pyrococcus abyssi (strain GE5 / Orsay)).